The sequence spans 227 residues: PKHD-type hydroxylase Neut_0373 (227 aa).

The 102-residue stretch at 78-179 folds into the Fe2OG dioxygenase domain; it reads KIMPPFFNRY…RIACFMFIQS (102 aa). H97, D99, and H160 together coordinate Fe cation. A 2-oxoglutarate-binding site is contributed by R170.

The cofactor is Fe(2+). Requires L-ascorbate as cofactor.

The protein is PKHD-type hydroxylase Neut_0373 of Nitrosomonas eutropha (strain DSM 101675 / C91 / Nm57).